Reading from the N-terminus, the 188-residue chain is Phosphoribosylglycinamide formyltransferase (188 aa).

Residue 12–14 (GSN) participates in N(1)-(5-phospho-beta-D-ribosyl)glycinamide binding. Residues K66, 91 to 94 (MRLI), and N108 contribute to the (6R)-10-formyltetrahydrofolate site. The active-site Proton donor is the H110.

The protein belongs to the GART family.

It carries out the reaction N(1)-(5-phospho-beta-D-ribosyl)glycinamide + (6R)-10-formyltetrahydrofolate = N(2)-formyl-N(1)-(5-phospho-beta-D-ribosyl)glycinamide + (6S)-5,6,7,8-tetrahydrofolate + H(+). Its pathway is purine metabolism; IMP biosynthesis via de novo pathway; N(2)-formyl-N(1)-(5-phospho-D-ribosyl)glycinamide from N(1)-(5-phospho-D-ribosyl)glycinamide (10-formyl THF route): step 1/1. Functionally, catalyzes the transfer of a formyl group from 10-formyltetrahydrofolate to 5-phospho-ribosyl-glycinamide (GAR), producing 5-phospho-ribosyl-N-formylglycinamide (FGAR) and tetrahydrofolate. The protein is Phosphoribosylglycinamide formyltransferase of Staphylococcus aureus (strain MSSA476).